We begin with the raw amino-acid sequence, 85 residues long: Small ribosomal subunit protein bS16 (85 aa).

Belongs to the bacterial ribosomal protein bS16 family.

The chain is Small ribosomal subunit protein bS16 from Xanthomonas oryzae pv. oryzae (strain PXO99A).